The sequence spans 359 residues: Aminoacyl tRNA synthase complex-interacting multifunctional protein 1 (359 aa).

Positions 52-92 are required for fibroblast proliferation; that stretch reads AVLKRLEQKGAEADQIIEYLKQQVALLKEKAVLQATLREEK. The interval 100 to 241 is interaction with HSP90B1; that stretch reads KLKKEIEELK…APRTVISGLV (142 aa). A required for endothelial cell death region spans residues 149 to 163; it reads SVSTISCSIKEHSKG. A disordered region spans residues 156-196; it reads SIKEHSKGGGEEKKVKEKTDKKGEKKEKKLQSAAPSADSKP. Residues 157–185 show a composition bias toward basic and acidic residues; that stretch reads IKEHSKGGGEEKKVKEKTDKKGEKKEKKL. The tract at residues 163-239 is required for endothelial cell migration; the sequence is GGGEEKKVKE…EAAPRTVISG (77 aa). A Glycyl lysine isopeptide (Lys-Gly) (interchain with G-Cter in SUMO1) cross-link involves residue Lys-184. Position 187 is a phosphoserine (Ser-187). One can recognise a tRNA-binding domain in the interval 198–299; sequence DVSRLDLRIG…NGSVPGDRIT (102 aa). Lys-316 is modified (N6-succinyllysine).

As to quaternary structure, homodimer. Part of the multisynthetase complex (MSC), a multisubunit complex that groups tRNA ligases for Arg (RARS1), Asp (DARS1), Gln (QARS1), Ile (IARS1), Leu (LARS1), Lys (KARS1), Met (MARS1) the bifunctional ligase for Glu and Pro (EPRS1) and the auxiliary subunits AIMP1/p43, AIMP2/p38 and EEF1E1/p18. Interacts (via N-terminus) with RARS1 (via N-terminus). Part of a complex composed of RARS1, QARS1 and AIMP1. Interacts (via C-terminus) with SMURF2. Interacts (via N-terminus) with HSP90B1/gp96 (via C-terminus). Interacts with PSMA7. Interacts with TARS3. In terms of processing, cleaved by caspase-7 in response to apoptosis to produce EMAP-II.

The protein resides in the nucleus. Its subcellular location is the cytoplasm. It is found in the cytosol. It localises to the secreted. The protein localises to the endoplasmic reticulum. The protein resides in the golgi apparatus. Its function is as follows. Non-catalytic component of the multisynthase complex. Stimulates the catalytic activity of cytoplasmic arginyl-tRNA synthase. Binds tRNA. Possesses inflammatory cytokine activity. Negatively regulates TGF-beta signaling through stabilization of SMURF2 by binding to SMURF2 and inhibiting its SMAD7-mediated degradation. Involved in glucose homeostasis through induction of glucagon secretion at low glucose levels. Promotes dermal fibroblast proliferation and wound repair. Regulates KDELR1-mediated retention of HSP90B1/gp96 in the endoplasmic reticulum. Plays a role in angiogenesis by inducing endothelial cell migration at low concentrations and endothelian cell apoptosis at high concentrations. Induces maturation of dendritic cells and monocyte cell adhesion. In Cricetulus griseus (Chinese hamster), this protein is Aminoacyl tRNA synthase complex-interacting multifunctional protein 1 (AIMP1).